The primary structure comprises 248 residues: Cyclo(L-leucyl-L-leucyl) synthase (248 aa).

Ser37 (nucleophile) is an active-site residue. Substrate contacts are provided by residues Asn40, 180 to 184, Tyr204, and 209 to 210; these read YVIAE and KL.

This sequence belongs to the CDPS family. In terms of assembly, monomer.

The catalysed reaction is 2 L-leucyl-tRNA(Leu) = cyclo(L-leucyl-L-leucyl) + 2 tRNA(Leu) + 2 H(+). Involved in the biosynthesis of pulcherrimin, a red extracellular pigment. It uses activated amino acids in the form of aminoacyl-tRNAs (aa-tRNAs) as substrates to catalyze the ATP-independent formation of cyclodipeptides which are intermediates in diketopiperazine (DKP) biosynthetic pathways. Catalyzes the formation of cyclo(L-Leu-L-Leu) (cLL) from L-leucyl-tRNA(Leu). Can also incorporate various nonpolar residues, such as L-phenylalanine, L-leucine and methionine, into cyclodipeptides. The protein is Cyclo(L-leucyl-L-leucyl) synthase (yvmC) of Bacillus subtilis (strain 168).